Reading from the N-terminus, the 66-residue chain is Large ribosomal subunit protein bL35 (66 aa).

It belongs to the bacterial ribosomal protein bL35 family.

The protein is Large ribosomal subunit protein bL35 of Caulobacter vibrioides (strain ATCC 19089 / CIP 103742 / CB 15) (Caulobacter crescentus).